The primary structure comprises 292 residues: METYSVWNRIYDYINPIAFKIFDISVHWYGIMYVSAMLIALLIAKAFITYRNERFPITQELLDSFFIWVEIGVILGGRIGYVLIYSPNRWEYLMQPWQMFNPYTNGVFVGISGFSYHGAMAGFVLAAIIFCYVKKQSFWIFMDLSAISIPLGYVFGRIGNFFNHELFGRVIESDSSLRDIGILVNGELRYPSQLFEAFAEGIIVFILLICLLRYAKKPGTLLVAYGVFYALARFVCEYFREADSQMGYFVFGLSMGQILSLVMLVISIFLGLFVFVQKPISSQKIKHQRKKK.

The next 4 helical transmembrane spans lie at 24–44, 65–85, 110–130, and 136–156; these read ISVH…LLIA, FFIW…VLIY, GISG…AIIF, and QSFW…YVFG. R157 serves as a coordination point for a 1,2-diacyl-sn-glycero-3-phospho-(1'-sn-glycerol). 3 consecutive transmembrane segments (helical) span residues 192 to 212, 219 to 239, and 256 to 276; these read SQLF…ICLL, GTLL…CEYF, and GQIL…FVFV.

This sequence belongs to the Lgt family.

It is found in the cell inner membrane. The enzyme catalyses L-cysteinyl-[prolipoprotein] + a 1,2-diacyl-sn-glycero-3-phospho-(1'-sn-glycerol) = an S-1,2-diacyl-sn-glyceryl-L-cysteinyl-[prolipoprotein] + sn-glycerol 1-phosphate + H(+). It participates in protein modification; lipoprotein biosynthesis (diacylglyceryl transfer). In terms of biological role, catalyzes the transfer of the diacylglyceryl group from phosphatidylglycerol to the sulfhydryl group of the N-terminal cysteine of a prolipoprotein, the first step in the formation of mature lipoproteins. This is Phosphatidylglycerol--prolipoprotein diacylglyceryl transferase from Helicobacter hepaticus (strain ATCC 51449 / 3B1).